The following is a 422-amino-acid chain: Serine--tRNA ligase (422 aa).

Residue 238–240 participates in L-serine binding; the sequence is TSE. ATP is bound at residue 269-271; the sequence is RKE. E292 lines the L-serine pocket. 356-359 is an ATP binding site; the sequence is EISS. Residue S390 coordinates L-serine.

This sequence belongs to the class-II aminoacyl-tRNA synthetase family. Type-1 seryl-tRNA synthetase subfamily. In terms of assembly, homodimer. The tRNA molecule binds across the dimer.

Its subcellular location is the cytoplasm. It carries out the reaction tRNA(Ser) + L-serine + ATP = L-seryl-tRNA(Ser) + AMP + diphosphate + H(+). It catalyses the reaction tRNA(Sec) + L-serine + ATP = L-seryl-tRNA(Sec) + AMP + diphosphate + H(+). It functions in the pathway aminoacyl-tRNA biosynthesis; selenocysteinyl-tRNA(Sec) biosynthesis; L-seryl-tRNA(Sec) from L-serine and tRNA(Sec): step 1/1. Functionally, catalyzes the attachment of serine to tRNA(Ser). Is also able to aminoacylate tRNA(Sec) with serine, to form the misacylated tRNA L-seryl-tRNA(Sec), which will be further converted into selenocysteinyl-tRNA(Sec). This is Serine--tRNA ligase from Helicobacter hepaticus (strain ATCC 51449 / 3B1).